A 206-amino-acid polypeptide reads, in one-letter code: Ribosomal RNA large subunit methyltransferase E (206 aa).

Residues glycine 60, tryptophan 62, aspartate 80, aspartate 96, and aspartate 121 each contribute to the S-adenosyl-L-methionine site. Residue lysine 161 is the Proton acceptor of the active site.

This sequence belongs to the class I-like SAM-binding methyltransferase superfamily. RNA methyltransferase RlmE family.

It localises to the cytoplasm. The enzyme catalyses uridine(2552) in 23S rRNA + S-adenosyl-L-methionine = 2'-O-methyluridine(2552) in 23S rRNA + S-adenosyl-L-homocysteine + H(+). Specifically methylates the uridine in position 2552 of 23S rRNA at the 2'-O position of the ribose in the fully assembled 50S ribosomal subunit. This is Ribosomal RNA large subunit methyltransferase E from Legionella pneumophila (strain Corby).